A 323-amino-acid polypeptide reads, in one-letter code: Thymidine kinase (323 aa).

An ATP-binding site is contributed by G11–T18. The Proton acceptor role is filled by E36. Residues Y54 and Q78 each coordinate substrate. Residue R169 participates in ATP binding. A substrate-binding site is contributed by R175.

The protein belongs to the herpesviridae thymidine kinase family. Homodimer.

It catalyses the reaction thymidine + ATP = dTMP + ADP + H(+). In terms of biological role, catalyzes the transfer of the gamma-phospho group of ATP to thymidine to generate dTMP in the salvage pathway of pyrimidine synthesis. The dTMP serves as a substrate for DNA polymerase during viral DNA replication. Allows the virus to be reactivated and to grow in non-proliferative cells lacking a high concentration of phosphorylated nucleic acid precursors. This chain is Thymidine kinase, found in Bos taurus (Bovine).